We begin with the raw amino-acid sequence, 253 residues long: 5'-nucleotidase SurE (253 aa).

A divalent metal cation is bound by residues Asp8, Asp9, Ser39, and Asn91.

It belongs to the SurE nucleotidase family. Requires a divalent metal cation as cofactor.

The protein resides in the cytoplasm. It carries out the reaction a ribonucleoside 5'-phosphate + H2O = a ribonucleoside + phosphate. Its function is as follows. Nucleotidase that shows phosphatase activity on nucleoside 5'-monophosphates. This Leptothrix cholodnii (strain ATCC 51168 / LMG 8142 / SP-6) (Leptothrix discophora (strain SP-6)) protein is 5'-nucleotidase SurE.